Consider the following 69-residue polypeptide: A-kinase anchor protein inhibitor 1 (69 aa).

Residues 39-69 (QESLRREGRPGDSRAWGQLGGCELTKKHEKK) are disordered. Basic and acidic residues predominate over residues 41 to 50 (SLRREGRPGD).

As to quaternary structure, binds cAMP-dependent protein kinase (PKA). Interacts specifically with RII-regulatory subunits of PKA (PRKAR2A and PRKAR2B). In terms of tissue distribution, preferentially expressed in the neural tissues.

Functionally, protein kinase A (PKA)-binding protein. Binds to type II regulatory subunits of protein kinase A (PKA) and may block the A-kinase anchoring protein (AKAP)-mediated subcellular localization of PKA. The polypeptide is A-kinase anchor protein inhibitor 1 (Mus musculus (Mouse)).